The following is a 74-amino-acid chain: MEKLTILLLVAAVLMSTQALIQEKRPKEKIKFLSKRKSIPESWWEGECSGWSVHCTQHSDCCSGECTGSYCELY.

The N-terminal stretch at 1-19 (MEKLTILLLVAAVLMSTQA) is a signal peptide. A propeptide spanning residues 20-46 (LIQEKRPKEKIKFLSKRKSIPESWWEG) is cleaved from the precursor. 3 disulfides stabilise this stretch: Cys48–Cys62, Cys55–Cys66, and Cys61–Cys71.

This sequence belongs to the conotoxin O2 superfamily. As to expression, expressed by the venom duct.

It is found in the secreted. The polypeptide is Conotoxin VnMEKL-0222 (Conus ventricosus (Mediterranean cone)).